We begin with the raw amino-acid sequence, 301 residues long: Mitochondrial carnitine/acylcarnitine carrier protein (301 aa).

Ala-2 is subject to N-acetylalanine. The Cytoplasmic portion of the chain corresponds to 2-12 (ADQPKPISPLK). 3 Solcar repeats span residues 8-99 (ISPL…GKKL), 108-196 (LSYP…VKNI), and 207-293 (LSVP…AMKF). Residues 13-31 (NLLAGGFGGVCLVFVGHPL) form a helical membrane-spanning segment. The Mitochondrial matrix segment spans residues 32 to 73 (DTVKVRLQTQPPSLPGQPPMYSGTFDCFRKTLFREGIRGLYR). A helical membrane pass occupies residues 74–93 (GMAAPIIGVTPMFAVCFFGF). The Cytoplasmic segment spans residues 94 to 112 (GLGKKLQQKHPEDVLSYPQ). The helical transmembrane segment at 113 to 131 (LFAAGMLSGIFTTGIMTPG) threads the bilayer. Residues 132–170 (ERIKCLLQIQASSGETKYTGTLDCAKKLYQEFGIRGIYK) lie on the Mitochondrial matrix side of the membrane. Lys-148 and Lys-157 each carry N6-acetyllysine. N6-acetyllysine; alternate is present on Lys-170. Position 170 is an N6-succinyllysine; alternate (Lys-170). A helical transmembrane segment spans residues 171 to 190 (GTVVTLMRDVPASGMYFMTY). Topologically, residues 191-211 (EWVKNIFTPEGKRVSELSVPR) are cytoplasmic. A helical transmembrane segment spans residues 212-230 (VLVAGGIAGIFNWAVAIPP). Over 231-267 (DVLKSRFQTAPPGKYPNGFRDVLRELIPDEGVTSLYK) the chain is Mitochondrial matrix. Residues 268 to 287 (GFNAVMIRAFPANAACFLGF) form a helical membrane-spanning segment. At 288–301 (EVAMKFLNWATPNL) the chain is on the cytoplasmic side.

The protein belongs to the mitochondrial carrier (TC 2.A.29) family.

It localises to the mitochondrion inner membrane. It catalyses the reaction O-acetyl-(R)-carnitine(in) + (R)-carnitine(out) = O-acetyl-(R)-carnitine(out) + (R)-carnitine(in). The catalysed reaction is an O-acyl-(R)-carnitine(in) + (R)-carnitine(out) = an O-acyl-(R)-carnitine(out) + (R)-carnitine(in). It carries out the reaction O-propanoyl-(R)-carnitine(in) + (R)-carnitine(out) = O-propanoyl-(R)-carnitine(out) + (R)-carnitine(in). The enzyme catalyses O-hexadecanoyl-(R)-carnitine(in) + (R)-carnitine(out) = O-hexadecanoyl-(R)-carnitine(out) + (R)-carnitine(in). It catalyses the reaction O-octanoyl-(R)-carnitine(in) + (R)-carnitine(out) = O-octanoyl-(R)-carnitine(out) + (R)-carnitine(in). The catalysed reaction is (R)-carnitine(in) = (R)-carnitine(out). In terms of biological role, mediates the electroneutral exchange of acylcarnitines (O-acyl-(R)-carnitine or L-acylcarnitine) of different acyl chain lengths (ranging from O-acetyl-(R)-carnitine to long-chain O-acyl-(R)-carnitines) with free carnitine ((R)-carnitine or L-carnitine) across the mitochondrial inner membrane, via a ping-pong mechanism. Key player in the mitochondrial oxidation pathway, it translocates the fatty acids in the form of acylcarnitines into the mitochondrial matrix, where the carnitine palmitoyltransferase 2 (CPT-2) activates them to undergo fatty acid beta-oxidation. Catalyzes the unidirectional transport (uniport) of carnitine at lower rates than the antiport (exchange). The sequence is that of Mitochondrial carnitine/acylcarnitine carrier protein (SLC25A20) from Macaca fascicularis (Crab-eating macaque).